Here is a 208-residue protein sequence, read N- to C-terminus: 3-demethoxyubiquinol 3-hydroxylase (208 aa).

Residues glutamate 57, glutamate 87, histidine 90, glutamate 139, glutamate 171, and histidine 174 each coordinate Fe cation.

The protein belongs to the COQ7 family. Fe cation is required as a cofactor.

It localises to the cell membrane. It catalyses the reaction a 5-methoxy-2-methyl-3-(all-trans-polyprenyl)benzene-1,4-diol + AH2 + O2 = a 3-demethylubiquinol + A + H2O. The protein operates within cofactor biosynthesis; ubiquinone biosynthesis. Its function is as follows. Catalyzes the hydroxylation of 2-nonaprenyl-3-methyl-6-methoxy-1,4-benzoquinol during ubiquinone biosynthesis. This is 3-demethoxyubiquinol 3-hydroxylase from Burkholderia mallei (strain NCTC 10229).